Consider the following 263-residue polypeptide: Putative replication protein PDa0002 (263 aa).

The polypeptide is Putative replication protein PDa0002 (Xylella fastidiosa (strain Temecula1 / ATCC 700964)).